The primary structure comprises 282 residues: 3-methyl-2-oxobutanoate hydroxymethyltransferase (282 aa).

Mg(2+) contacts are provided by aspartate 44 and aspartate 83. 3-methyl-2-oxobutanoate is bound by residues 44 to 45, aspartate 83, and lysine 112; that span reads DS. Glutamate 114 is a binding site for Mg(2+). Glutamate 181 acts as the Proton acceptor in catalysis.

This sequence belongs to the PanB family. As to quaternary structure, homodecamer; pentamer of dimers. Mg(2+) serves as cofactor.

Its subcellular location is the cytoplasm. The catalysed reaction is 3-methyl-2-oxobutanoate + (6R)-5,10-methylene-5,6,7,8-tetrahydrofolate + H2O = 2-dehydropantoate + (6S)-5,6,7,8-tetrahydrofolate. The protein operates within cofactor biosynthesis; coenzyme A biosynthesis. Catalyzes the reversible reaction in which hydroxymethyl group from 5,10-methylenetetrahydrofolate is transferred onto alpha-ketoisovalerate to form ketopantoate. The chain is 3-methyl-2-oxobutanoate hydroxymethyltransferase from Pyrococcus abyssi (strain GE5 / Orsay).